We begin with the raw amino-acid sequence, 664 residues long: Prelamin-A/C (664 aa).

At methionine 1 the chain carries N-acetylmethionine. The interval 1–25 is disordered; the sequence is METPSQRRATRSGAQASSTPLSPTR. The interval 1–33 is head; it reads METPSQRRATRSGAQASSTPLSPTRITRLQEKE. The interaction with MLIP stretch occupies residues 1 to 130; it reads METPSQRRAT…TKKEGDLIAA (130 aa). A Phosphothreonine modification is found at threonine 3. Position 5 is a phosphoserine (serine 5). At threonine 10 the chain carries Phosphothreonine. A phosphoserine mark is found at serine 12 and serine 18. Threonine 19 bears the Phosphothreonine mark. Serine 22 bears the Phosphoserine; by CDK1 mark. An IF rod domain is found at 31-387; that stretch reads EKEDLQELND…KLLEGEEERL (357 aa). Lysine 32 carries the N6-acetyllysine; alternate modification. An N6-succinyllysine; alternate modification is found at lysine 32. A Glycyl lysine isopeptide (Lys-Gly) (interchain with G-Cter in SUMO2); alternate cross-link involves residue lysine 32. Residues 34–70 are coil 1A; sequence DLQELNDRLAVYIDRVRSLETENAGLRLRITESEEVV. A phosphoserine mark is found at serine 51, serine 66, and serine 71. Residues 71-80 form a linker 1 region; it reads SREVSGIKAA. An N6-acetyllysine mark is found at lysine 78 and lysine 97. Residues 81–218 are coil 1B; the sequence is YEAELGDARK…NIYSEELRET (138 aa). Lysine 97 participates in a covalent cross-link: Glycyl lysine isopeptide (Lys-Gly) (interchain with G-Cter in SUMO2). Position 107 is a phosphoserine (serine 107). An N6-acetyllysine mark is found at lysine 108, lysine 114, lysine 123, lysine 135, lysine 144, and lysine 155. Residue lysine 171 is modified to N6-acetyllysine; alternate. N6-succinyllysine; alternate is present on lysine 171. Residue lysine 171 forms a Glycyl lysine isopeptide (Lys-Gly) (interchain with G-Cter in SUMO2); alternate linkage. Residues lysine 180, lysine 201, and lysine 208 each carry the N6-acetyllysine modification. Lysine 201 participates in a covalent cross-link: Glycyl lysine isopeptide (Lys-Gly) (interchain with G-Cter in SUMO2); alternate. Residue lysine 201 forms a Glycyl lysine isopeptide (Lys-Gly) (interchain with G-Cter in SUMO); alternate linkage. Residue lysine 208 forms a Glycyl lysine isopeptide (Lys-Gly) (interchain with G-Cter in SUMO2) linkage. Serine 212 is modified (phosphoserine). Glycyl lysine isopeptide (Lys-Gly) (interchain with G-Cter in SUMO2) cross-links involve residues lysine 219 and lysine 233. The segment at 219–242 is linker 2; it reads KRRHETRLVEIDNGKQREFESRLA. N6-acetyllysine occurs at positions 233, 260, 265, and 270. A coil 2 region spans residues 243 to 383; that stretch reads DALQELRAQH…HAYRKLLEGE (141 aa). A necessary and sufficient for the interaction with IFFO1 region spans residues 259 to 331; it reads YKKELEKTYS…DLEDSLARER (73 aa). Lysine 260 participates in a covalent cross-link: Glycyl lysine isopeptide (Lys-Gly) (interchain with G-Cter in SUMO2); alternate. Lysine 270 participates in a covalent cross-link: Glycyl lysine isopeptide (Lys-Gly) (interchain with G-Cter in SUMO2); alternate. Serine 277 is modified (phosphoserine). Phosphoserine; by ATR is present on serine 282. Serine 301 and serine 307 each carry phosphoserine. Residue lysine 311 forms a Glycyl lysine isopeptide (Lys-Gly) (interchain with G-Cter in SUMO2); alternate linkage. N6-acetyllysine occurs at positions 311, 316, and 341. Residues lysine 366 and lysine 378 each participate in a glycyl lysine isopeptide (Lys-Gly) (interchain with G-Cter in SUMO2) cross-link. Residues 384–442 form a disordered region; the sequence is EERLRLSPSPTSQRSRGRASSHSSQTQGGGSVTKKRKLESTESRSSFSQHARTSGRVAV. A tail region spans residues 384–664; the sequence is EERLRLSPSP…TQSPQNCSIM (281 aa). Residue serine 390 is modified to Phosphoserine. Serine 392 carries the phosphoserine; by CDK1 modification. At serine 395 the chain carries Phosphoserine; by ATR. 6 positions are modified to phosphoserine: serine 398, serine 403, serine 404, serine 406, serine 407, and serine 414. Threonine 416 bears the Phosphothreonine mark. Lysine 417 carries the N6-acetyllysine modification. Glycyl lysine isopeptide (Lys-Gly) (interchain with G-Cter in SUMO2) cross-links involve residues lysine 417 and lysine 420. The Nuclear localization signal signature appears at 417–422; sequence KKRKLE. 4 positions are modified to phosphoserine: serine 423, serine 426, serine 429, and serine 431. A compositionally biased stretch (polar residues) spans 426–435; sequence SRSSFSQHAR. Positions 428 to 545 constitute an LTD domain; the sequence is SSFSQHARTS…EEVAMRKLVR (118 aa). Residue lysine 450 forms a Glycyl lysine isopeptide (Lys-Gly) (interchain with G-Cter in SUMO2); alternate linkage. N6-acetyllysine is present on residues lysine 450 and lysine 457. 2 positions are modified to phosphoserine: serine 458 and serine 463. Residues lysine 470 and lysine 486 each participate in a glycyl lysine isopeptide (Lys-Gly) (interchain with G-Cter in SUMO2) cross-link. Lysine 486 carries the post-translational modification N6-acetyllysine. 3 positions are modified to phosphothreonine: threonine 496, threonine 505, and threonine 510. Residues serine 533 and serine 546 each carry the phosphoserine modification. At threonine 548 the chain carries Phosphothreonine. The disordered stretch occupies residues 552-576; it reads DDEDEDGDDLLHHHHGSHCSSSGDP. Residues serine 568 and serine 571 each carry the phosphoserine modification. A Glycyl lysine isopeptide (Lys-Gly) (interchain with G-Cter in SUMO2); alternate cross-link involves residue lysine 597. A Glycyl lysine isopeptide (Lys-Gly) (interchain with G-Cter in SUMO1); alternate cross-link involves residue lysine 597. Residues 598-619 form a disordered region; sequence ASASGSGAQVGGPISSGSSASS. A phosphoserine mark is found at serine 612, serine 613, serine 616, and serine 619. Serine 625 and serine 628 each carry an O-linked (GlcNAc) serine glycan. Phosphoserine occurs at positions 628, 632, 636, and 652. Residues 647 to 661 constitute a propeptide, removed in Lamin-A/C form; sequence LLGNSSPRTQSPQNC. Cysteine 661 is modified (cysteine methyl ester). A lipid anchor (S-farnesyl cysteine) is attached at cysteine 661. Positions 662–664 are cleaved as a propeptide — removed in Prelamin-A/C form and in Lamin-A/C form; that stretch reads SIM.

The protein belongs to the intermediate filament family. In terms of assembly, homodimer of lamin A and lamin C. Lamin dimers then assemble into dimeric head-to-tail polymers. Ultimately, two head-to-tail polymers assemble laterally into a protofilament with a uniformly shaped rod of 3.5 nm in diameter. Interacts with lamin-associated polypeptides IA, IB and TMPO-alpha, RB1 and with emerin. Interacts with SREBF1, SREBF2, SUN2 and TMEM43. Interacts with TMEM201. Proteolytically processed isoform A interacts with NARF. Interacts with SUN1. Interacts with MLIP. Interacts with DMPK; may regulate nuclear envelope stability. Interacts with SUV39H1; the interaction increases stability of SUV39H1. Interacts with SYNE2. Interacts with ITSN1 isoform 2. Interacts with IFFO1; enables the formation of an interior nucleoskeleton that is recruited to DNA double-strand breaks. As to quaternary structure, interacts with EMD. Interacts (via C-terminus) with LEMD2 (via N-terminus) (in vitro). Post-translationally, proteolytic cleavage of the C-terminal of 18 residues of prelamin-A/C results in the production of lamin-A/C. The prelamin-A/C maturation pathway includes farnesylation of CAAX motif by protein farnesyltransferase (FNTA and FNTB), removal of the last three amino acids (-AAX) by RCE1/FACE2 and/or ZMPSTE24, methylation of the C-terminal cysteine by ICMT and endoproteolytic removal of the last 15 C-terminal amino acids by ZMPSTE24. Proteolytic cleavage requires prior farnesylation and methylation, and absence of these blocks cleavage. In terms of processing, farnesylation of prelamin-A/C facilitates nuclear envelope targeting. Phosphorylation plays a key role in lamin organization, subcellular localization and nuclear envelope disintegration. Phosphorylation by CDK1 at Ser-22 and Ser-392 at the onset of mitosis drives lamin disassembly and nuclear envelope breakdown. Phosphorylation at Ser-22 and Ser-392 during interphase promotes localization to the nucleoplasm and regulates lamina assembly. Phosphorylation at Ser-22, Ser-392 and Ser-628 during interphase causes redistribution between the nucleus and the cytoplasm. Phosphorylation at Ser-22 by CDK1 regulates matrix stiffness. Phosphorylation status of Ser-22 determines its localization between double-strand break (DSB) sites and the nuclear matrix. Phosphorylated by ATR at Ser-282 in response to DNA damage, leading to lamin disassembly and nuclear envelope rupture. Phosphorylation also regulates stability in micronuclei arising from genome instability: phosphorylation at Ser-395 by ATR in response to genome instability and double-stranded DNA breaks primes LMNA for subsequent phosphorylation at Ser-392 by CDK1 and micronuclei envelope rupture. The rupture of micronuclear envelope triggers the cGAS-STING pathway thereby activating the type I interferon response and innate immunity. Post-translationally, acetylation by KAT8 is required for nuclear architecture. In terms of processing, sumoylation is necessary for the localization to the nuclear envelope. In terms of tissue distribution, in the arteries, prelamin-A/C accumulation is not observed in young healthy vessels but is prevalent in medial vascular smooth muscle cells (VSMCs) from aged individuals and in atherosclerotic lesions, where it often colocalizes with senescent and degenerate VSMCs. Prelamin-A/C expression increases with age and disease. In normal aging, the accumulation of prelamin-A/C is caused in part by the down-regulation of ZMPSTE24/FACE1 in response to oxidative stress.

It localises to the nucleus lamina. The protein resides in the nucleus envelope. The protein localises to the nucleus. It is found in the nucleoplasm. Its subcellular location is the nucleus matrix. It localises to the nucleus speckle. Functionally, lamins are intermediate filament proteins that assemble into a filamentous meshwork, and which constitute the major components of the nuclear lamina, a fibrous layer on the nucleoplasmic side of the inner nuclear membrane. Lamins provide a framework for the nuclear envelope, bridging the nuclear envelope and chromatin, thereby playing an important role in nuclear assembly, chromatin organization, nuclear membrane and telomere dynamics. Lamin A and C also regulate matrix stiffness by conferring nuclear mechanical properties. The structural integrity of the lamina is strictly controlled by the cell cycle, as seen by the disintegration and formation of the nuclear envelope in prophase and telophase, respectively. Lamin A and C are present in equal amounts in the lamina of mammals. Also invoved in DNA repair: recruited by DNA repair proteins XRCC4 and IFFO1 to the DNA double-strand breaks (DSBs) to prevent chromosome translocation by immobilizing broken DNA ends. Required for normal development of peripheral nervous system and skeletal muscle and for muscle satellite cell proliferation. Required for osteoblastogenesis and bone formation. Also prevents fat infiltration of muscle and bone marrow, helping to maintain the volume and strength of skeletal muscle and bone. Required for cardiac homeostasis. Prelamin-A/C can accelerate smooth muscle cell senescence. It acts to disrupt mitosis and induce DNA damage in vascular smooth muscle cells (VSMCs), leading to mitotic failure, genomic instability, and premature senescence. In Homo sapiens (Human), this protein is Prelamin-A/C (LMNA).